A 293-amino-acid polypeptide reads, in one-letter code: Exosome complex component RRP4 (293 aa).

Positions 1-20 are disordered; it reads MALEMRLPKARKPLSESLGR. One can recognise an S1 motif domain in the interval 79–159; sequence EVGDIVVGRI…SDGAVSLHTR (81 aa). S124 carries the post-translational modification Phosphoserine.

Belongs to the RRP4 family. Component of the RNA exosome core complex (Exo-9), composed of EXOSC1, EXOSC2, EXOSC3, EXOSC4, EXOSC5, EXOSC6, EXOSC7, EXOSC8 and EXOSC9; within the complex interacts with EXOSC4 and EXOSC7. The catalytically inactive RNA exosome core complex (Exo-9) associates with the catalytic subunit EXOSC10/RRP6. Exo-9 may associate with DIS3 to form the nucleolar exosome complex, or DIS3L to form the cytoplasmic exosome complex. Exo-9 is formed by a hexameric base ring consisting of the heterodimers EXOSC4-EXOSC9, EXOSC5-EXOSC8 and EXOSC6-EXOSC7, and a cap ring consisting of EXOSC1, EXOSC2 and EXOSC3. The RNA exosome complex associates with cofactors C1D/RRP47, MPHOSPH6/MPP6 and MTREX/MTR4. Interacts with GTPBP1. Interacts with ZFP36L1 (via N-terminus).

It is found in the cytoplasm. The protein resides in the nucleus. The protein localises to the nucleolus. In terms of biological role, non-catalytic component of the RNA exosome complex which has 3'-&gt;5' exoribonuclease activity and participates in a multitude of cellular RNA processing and degradation events. In the nucleus, the RNA exosome complex is involved in proper maturation of stable RNA species such as rRNA, snRNA and snoRNA, in the elimination of RNA processing by-products and non-coding 'pervasive' transcripts, such as antisense RNA species and promoter-upstream transcripts (PROMPTs), and of mRNAs with processing defects, thereby limiting or excluding their export to the cytoplasm. The RNA exosome may be involved in Ig class switch recombination (CSR) and/or Ig variable region somatic hypermutation (SHM) by targeting AICDA deamination activity to transcribed dsDNA substrates. In the cytoplasm, the RNA exosome complex is involved in general mRNA turnover and specifically degrades inherently unstable mRNAs containing AU-rich elements (AREs) within their 3' untranslated regions, and in RNA surveillance pathways, preventing translation of aberrant mRNAs. It seems to be involved in degradation of histone mRNA. The catalytic inactive RNA exosome core complex of 9 subunits (Exo-9) is proposed to play a pivotal role in the binding and presentation of RNA for ribonucleolysis, and to serve as a scaffold for the association with catalytic subunits and accessory proteins or complexes. EXOSC2 as peripheral part of the Exo-9 complex stabilizes the hexameric ring of RNase PH-domain subunits through contacts with EXOSC4 and EXOSC7. The sequence is that of Exosome complex component RRP4 (Exosc2) from Mus musculus (Mouse).